We begin with the raw amino-acid sequence, 531 residues long: T-complex protein 1 subunit zeta-2 (531 aa).

Belongs to the TCP-1 chaperonin family. As to quaternary structure, component of the chaperonin-containing T-complex (TRiC), a heterooligomeric complex of about 850 to 900 kDa that forms two stacked rings, 12 to 16 nm in diameter. Testis specific.

The protein localises to the cytoplasm. Functionally, component of the chaperonin-containing T-complex (TRiC), a molecular chaperone complex that assists the folding of proteins upon ATP hydrolysis. The polypeptide is T-complex protein 1 subunit zeta-2 (Cct6b) (Mus musculus (Mouse)).